A 151-amino-acid polypeptide reads, in one-letter code: MARLHSGKRGSSGSTRPLRTEVPEWVSMSAEEIEAKIVEMAKDGKQSAIIGNILRDMYGVPNVKLITGKSVSSIMKEAGFYAEVPEDLFNLMKKAINLRNHLENNPRDTHSTVGLKLIESKIRRLVKYYRGTKVLPAKWRYSPETARLLVE.

The interval 1–20 (MARLHSGKRGSSGSTRPLRT) is disordered.

Belongs to the universal ribosomal protein uS15 family. In terms of assembly, part of the 30S ribosomal subunit.

The polypeptide is Small ribosomal subunit protein uS15 (Methanococcus maripaludis (strain C5 / ATCC BAA-1333)).